Reading from the N-terminus, the 305-residue chain is MMSFLVSIASIAMLVKIVLGTFANVFIVLVNFTDCIKKRKFLLADRILTVLAIFRFDLLWIILMNWSSSVFHVGLYFQVRFCICVVWIVTNHFNTWLANILSILYLLKIDNFSNLIFLGLKGKIKCPYIVLLPCFVLLFPNLIMVTICETTQANGHQGNLTGKTKLTYFTNLIAMTFTLGSLVPFTTFMICFLLLICSLCKHLRTMRLYGKGSQGPSASTHIKVLQVLISFLLLFSMFILLLIISDYNYTKSLEEPIHLICQVIGTLYPSRHSYILLWGNKRIKQAFVLAMVQVRARFWLKEKKP.

Residues 1–9 (MMSFLVSIA) lie on the Extracellular side of the membrane. The helical transmembrane segment at 10 to 30 (SIAMLVKIVLGTFANVFIVLV) threads the bilayer. Residues 31–46 (NFTDCIKKRKFLLADR) are Cytoplasmic-facing. Residues 47–67 (ILTVLAIFRFDLLWIILMNWS) form a helical membrane-spanning segment. The Extracellular segment spans residues 68-69 (SS). The helical transmembrane segment at 70–90 (VFHVGLYFQVRFCICVVWIVT) threads the bilayer. Over 91 to 99 (NHFNTWLAN) the chain is Cytoplasmic. The chain crosses the membrane as a helical span at residues 100-120 (ILSILYLLKIDNFSNLIFLGL). Over 121-127 (KGKIKCP) the chain is Extracellular. Residues 128-148 (YIVLLPCFVLLFPNLIMVTIC) form a helical membrane-spanning segment. Residues 149–176 (ETTQANGHQGNLTGKTKLTYFTNLIAMT) lie on the Cytoplasmic side of the membrane. The chain crosses the membrane as a helical span at residues 177–197 (FTLGSLVPFTTFMICFLLLIC). Over 198 to 223 (SLCKHLRTMRLYGKGSQGPSASTHIK) the chain is Extracellular. Residues 224–244 (VLQVLISFLLLFSMFILLLII) form a helical membrane-spanning segment. At 245–305 (SDYNYTKSLE…ARFWLKEKKP (61 aa)) the chain is on the cytoplasmic side.

Belongs to the G-protein coupled receptor T2R family.

The protein resides in the membrane. Putative taste receptor which may play a role in the perception of bitterness. The polypeptide is Taste receptor type 2 member 136 (Tas2r136) (Mus musculus (Mouse)).